The following is a 413-amino-acid chain: MAPPSVFSEVPQAQPVLVFKLTADFREDPDPRKVNLGVGAYRTDDCHPWVLPVVKKVEQKIANDNSLNHEYLPILGLAEFRSCASRLALGDDSPALKEKRVGGVQSLGGTGALRIGADFLARWYNGTNNKNTPVYVSSPTWENHNAVFSAAGFKDIRSYRYWDAEKRGLDLQGFLNDLENAPEFSIIVLHACAHNPTGTDPTPEQWKQIASVMKHRFLFPFFDSAYQGFASGNLERDAWAIRYFVSEGFEFFCAQSFSKNFGLYNERVGNLTVVGKEPESILRVLSQMEKIVRITWSNPPAQGARIVADTLSNPELFEEWKGNVKTMADRILTMRSELRARLEALKTPGTWNHITDQIGMFSYTGLNPKQVEYLINEKHIYLLPSGRINVSGLTTKNLDYVATSIHEAITKIQ.

Residues Gly-39 and Trp-141 each contribute to the L-aspartate site. Ser-149 bears the Phosphoserine mark. Asn-195 serves as a coordination point for L-aspartate. At Lys-259 the chain carries N6-(pyridoxal phosphate)lysine. Arg-387 is a binding site for L-aspartate.

Belongs to the class-I pyridoxal-phosphate-dependent aminotransferase family. In terms of assembly, homodimer. Requires pyridoxal 5'-phosphate as cofactor.

Its subcellular location is the cytoplasm. The catalysed reaction is L-aspartate + 2-oxoglutarate = oxaloacetate + L-glutamate. It carries out the reaction L-cysteine + 2-oxoglutarate = 2-oxo-3-sulfanylpropanoate + L-glutamate. The enzyme catalyses (2S)-2-aminobutanoate + 2-oxoglutarate = 2-oxobutanoate + L-glutamate. It catalyses the reaction 3-sulfino-L-alanine + 2-oxoglutarate = 3-sulfinopyruvate + L-glutamate. Functionally, biosynthesis of L-glutamate from L-aspartate or L-cysteine. Important regulator of levels of glutamate, the major excitatory neurotransmitter of the vertebrate central nervous system. Acts as a scavenger of glutamate in brain neuroprotection. The aspartate aminotransferase activity is involved in hepatic glucose synthesis during development and in adipocyte glyceroneogenesis. Using L-cysteine as substrate, regulates levels of mercaptopyruvate, an important source of hydrogen sulfide. Mercaptopyruvate is converted into H(2)S via the action of 3-mercaptopyruvate sulfurtransferase (3MST). Hydrogen sulfide is an important synaptic modulator and neuroprotectant in the brain. The protein is Aspartate aminotransferase, cytoplasmic of Macaca fascicularis (Crab-eating macaque).